The primary structure comprises 316 residues: Olfactory receptor class A-like protein 1 (316 aa).

Topologically, residues 1–8 are extracellular; sequence MDLCVTIK. The chain crosses the membrane as a helical span at residues 9–29; that stretch reads GVSFLLQAGLGILANALVLLA. Over 30 to 39 the chain is Cytoplasmic; sequence YAHIRLAEAR. The chain crosses the membrane as a helical span at residues 40–60; sequence LQPVDAILCHLALVDLLLLLT. Over 61-97 the chain is Extracellular; sequence RGVPQTMTVFGMRNLLDDTGCKVVIYTYRIARALSVC. Cysteines 81 and 169 form a disulfide. A helical membrane pass occupies residues 98–118; the sequence is ITCMLSVFQAVTVAPAAGPLL. The Cytoplasmic portion of the chain corresponds to 119–132; that stretch reads SGVKARLPQLLAPT. The chain crosses the membrane as a helical span at residues 133 to 153; it reads FAALWFINMAVCIAAPFFSVA. Over 154 to 187 the chain is Extracellular; the sequence is PRNGTVPPFTLNLGFCHVDFHDNLSYVLNGVAVS. N-linked (GlcNAc...) asparagine glycans are attached at residues Asn-156 and Asn-176. A helical transmembrane segment spans residues 188–208; that stretch reads VRDFAFVGAMLASSGFILLLL. Topologically, residues 209 to 233 are cytoplasmic; sequence HRHRRQVRAVRRSQGSTMETRAART. Residues 234 to 254 form a helical membrane-spanning segment; the sequence is VLMLVILYSVFFGIDNVIWIY. The Extracellular segment spans residues 255–264; sequence MLTVAQVPPV. A helical transmembrane segment spans residues 265–285; that stretch reads VADMRVFFSSCYASLSPFLII. The Cytoplasmic portion of the chain corresponds to 286–316; that stretch reads SSNRKLKARMVCATSEQERQAEDGKNSSGKN.

This sequence belongs to the G-protein coupled receptor 1 family. As to expression, highly expressed in the olfactory rosette where it localizes to a subset of olfactory sensory neurons, mainly in the apical region of the neuroepithelium. Not detected in other tissues tested.

Its subcellular location is the cell membrane. Probable pheromone receptor. Shows high specificity for 4-hydroxyphenylacetic acid. Activation of the receptor stimulates intracellular calcium release. The sequence is that of Olfactory receptor class A-like protein 1 from Danio rerio (Zebrafish).